Here is a 130-residue protein sequence, read N- to C-terminus: Large ribosomal subunit protein bL12 (130 aa).

The protein belongs to the bacterial ribosomal protein bL12 family. In terms of assembly, homodimer. Part of the ribosomal stalk of the 50S ribosomal subunit. Forms a multimeric L10(L12)X complex, where L10 forms an elongated spine to which 2 to 4 L12 dimers bind in a sequential fashion. Binds GTP-bound translation factors.

Its function is as follows. Forms part of the ribosomal stalk which helps the ribosome interact with GTP-bound translation factors. Is thus essential for accurate translation. This Mycolicibacterium vanbaalenii (strain DSM 7251 / JCM 13017 / BCRC 16820 / KCTC 9966 / NRRL B-24157 / PYR-1) (Mycobacterium vanbaalenii) protein is Large ribosomal subunit protein bL12.